The sequence spans 364 residues: Histidinol-phosphate aminotransferase (364 aa).

Residue Lys-225 is modified to N6-(pyridoxal phosphate)lysine.

The protein belongs to the class-II pyridoxal-phosphate-dependent aminotransferase family. Histidinol-phosphate aminotransferase subfamily. In terms of assembly, homodimer. Requires pyridoxal 5'-phosphate as cofactor.

It carries out the reaction L-histidinol phosphate + 2-oxoglutarate = 3-(imidazol-4-yl)-2-oxopropyl phosphate + L-glutamate. It functions in the pathway amino-acid biosynthesis; L-histidine biosynthesis; L-histidine from 5-phospho-alpha-D-ribose 1-diphosphate: step 7/9. The protein is Histidinol-phosphate aminotransferase of Sulfurovum sp. (strain NBC37-1).